Consider the following 1009-residue polypeptide: MKNIFRRSVQIFHKDKKEGDKQDYTGSSGSSGNSGTDRSPTSSLSKKDKKHSKHHQNESYSGDNSPTLSRNHHDEIGHLQYTANHHIATSHHSHSHNHNHNHNHQLTQPIQQQQQTQHVNLASNNYYIRHIYTNNQYDETTQIVMNNGIPFIYNPNARKIFGVPLTQVPCRAGSNVPIIIEKLIDHIERTSLNSEGLFRIPGVDLTINQYIKLFDNGEDVDVSPIEPYTAAGLLKRFFRDLPVFVPQSINKRVVSLFIDEEGKKKPVDMEILSNLRVLVHQLPTVHFEVMQELTNLLGKLMSRSDQNKMTISNIAICLVPTLNCVPAIVTYSIQMHDFFYNEVFPQHHLYYMRPYEEKLVESAPTQPINIMTTSGGEKRYSSRPASITISGLLPSNGQNNSPSSSTITSTTITSPHDSTAPITFTVTTTFSPEQQQQMLQQQQQQQQQQEKQSSSSLSQSQQSIQPISDTNSTKSDRRTFRVDPNLDLTQYIEDTQYNVNRNYLYNGGPSGTTGTTPNGGSLSIGGGNGGNGGSSLSVGSGGGNGGSSLSVGSNTSVGVGGGGGGNNTTDQSKIYRRSVAYTNNEDTKAAIQQIKEKIDRYSKEKKTREEKEREKLLRYSIDLERYKDRTINNKQEKRASRDINKEIEREIEKKRLSPRERLNLFGLSSSSSSVNSTLTRSTANIISTIDGSGGSNRNSKNYGNGSSSSSNRRYSNTINQQLQMQLQQLQIQQQQYQQTQQSQIPLQYQQQQQQQQQQTTTTTTTSSGSNRFSSNRYKPVDLTQSSSNFRYSREIYDDDYYSNNNLMMFGNEQPNQTPISVSSSSAFTRQRSQSCFEPENLVLLQQQYQQYQQQQQQQQQIPFQANPQYSNAVIEQKLDQIRDTINNLHRDNRVSRDYTHYLREVEDLRSSLQKETVVSNEFIKNIELEDKLRREEEKNQRLIEEIHLLETYFILKEKSKAKRLSTTKDLLTRSRSPTLPSSINMSTSSLGSSSSSAYNNNNNNNNVPK.

2 disordered regions span residues 1 to 72 (MKNI…SRNH) and 89 to 117 (TSHH…QQTQ). A compositionally biased stretch (basic and acidic residues) spans 12–23 (FHKDKKEGDKQD). Positions 26-35 (GSSGSSGNSG) are enriched in low complexity. Residues 58 to 69 (ESYSGDNSPTLS) are compositionally biased toward polar residues. Residues 89 to 103 (TSHHSHSHNHNHNHN) are compositionally biased toward basic residues. The span at 104-117 (HQLTQPIQQQQQTQ) shows a compositional bias: low complexity. Residues 163–351 (VPLTQVPCRA…EVFPQHHLYY (189 aa)) form the Rho-GAP domain. 3 disordered regions span residues 388–420 (TISG…DSTA), 432–482 (PEQQ…TFRV), and 508–571 (GPSG…TTDQ). Composition is skewed to low complexity over residues 394–415 (PSNG…ITSP), 432–468 (PEQQ…QPIS), and 512–521 (TTGTTPNGGS). Positions 522 to 546 (LSIGGGNGGNGGSSLSVGSGGGNGG) are enriched in gly residues. The segment covering 547–557 (SSLSVGSNTSV) has biased composition (low complexity). Residues 580-656 (AYTNNEDTKA…IEREIEKKRL (77 aa)) adopt a coiled-coil conformation. Positions 686–713 (ISTIDGSGGSNRNSKNYGNGSSSSSNRR) are disordered. A compositionally biased stretch (low complexity) spans 695-713 (SNRNSKNYGNGSSSSSNRR). The stretch at 715–743 (SNTINQQLQMQLQQLQIQQQQYQQTQQSQ) forms a coiled coil. Residues 759 to 781 (TTTTTTTSSGSNRFSSNRYKPVD) are disordered. A compositionally biased stretch (polar residues) spans 766–781 (SSGSNRFSSNRYKPVD). The stretch at 839–952 (ENLVLLQQQY…IEEIHLLETY (114 aa)) forms a coiled coil. A disordered region spans residues 965 to 1009 (STTKDLLTRSRSPTLPSSINMSTSSLGSSSSSAYNNNNNNNNVPK). Residues 967–980 (TKDLLTRSRSPTLP) show a composition bias toward polar residues. A compositionally biased stretch (low complexity) spans 981–1009 (SSINMSTSSLGSSSSSAYNNNNNNNNVPK).

The protein localises to the cytoplasm. In terms of biological role, rho GTPase-activating protein involved in the signal transduction pathway. The sequence is that of Rho GTPase-activating protein gacT (gacT) from Dictyostelium discoideum (Social amoeba).